Reading from the N-terminus, the 266-residue chain is 3-methyl-2-oxobutanoate hydroxymethyltransferase (266 aa).

Residues aspartate 45 and aspartate 84 each contribute to the Mg(2+) site. 3-methyl-2-oxobutanoate is bound by residues 45–46 (DS), aspartate 84, and lysine 113. Glutamate 115 contacts Mg(2+). Catalysis depends on glutamate 183, which acts as the Proton acceptor.

Belongs to the PanB family. As to quaternary structure, homodecamer; pentamer of dimers. The cofactor is Mg(2+).

The protein resides in the cytoplasm. It carries out the reaction 3-methyl-2-oxobutanoate + (6R)-5,10-methylene-5,6,7,8-tetrahydrofolate + H2O = 2-dehydropantoate + (6S)-5,6,7,8-tetrahydrofolate. It participates in cofactor biosynthesis; (R)-pantothenate biosynthesis; (R)-pantoate from 3-methyl-2-oxobutanoate: step 1/2. Its function is as follows. Catalyzes the reversible reaction in which hydroxymethyl group from 5,10-methylenetetrahydrofolate is transferred onto alpha-ketoisovalerate to form ketopantoate. This Coxiella burnetii (strain CbuK_Q154) (Coxiella burnetii (strain Q154)) protein is 3-methyl-2-oxobutanoate hydroxymethyltransferase.